The primary structure comprises 1008 residues: Retinoblastoma-related protein (1008 aa).

The disordered stretch occupies residues 375 to 394; that stretch reads KRKVDSMTSPTKTITSPLSP. Positions 380-392 are enriched in polar residues; sequence SMTSPTKTITSPL. Residues 404–605 are domain A; that stretch reads TPVSTAMTTA…EKGSSMYNSL (202 aa). The tract at residues 404-853 is pocket; that stretch reads TPVSTAMTTA…NEVFIPSVKP (450 aa). Positions 606–722 are spacer; sequence TIARPNLSNE…HPTRGETCGE (117 aa). Positions 723-853 are domain B; it reads TAVNLFFSKI…NEVFIPSVKP (131 aa). 2 disordered regions span residues 865 to 899 and 988 to 1008; these read KNPN…SLPD and LQNG…LKTE.

It belongs to the retinoblastoma protein (RB) family.

It is found in the nucleus. Functionally, regulator of biological processes that recruits a histone deacetylase to control gene transcription. May play a role in the entry into mitosis, negatively regulating the cell proliferation. Formation of stable complexes with geminiviridae replication-associated proteins may create a cellular environment which favors viral DNA replication. This chain is Retinoblastoma-related protein (RBR), found in Pilosella officinarum (Mouse-ear hawkweed).